Consider the following 613-residue polypeptide: Spastin (613 aa).

Residues 1 to 42 (MNSPGGRGKKKGSAGSSSAPPAAGASPSAPSGPAPPAPPAGA) are disordered. Residues 1–61 (MNSPGGRGKK…KRNLYYFSYP (61 aa)) lie on the Cytoplasmic side of the membrane. A compositionally biased stretch (low complexity) spans 13–29 (SAGSSSAPPAAGASPSA). Residues 30-39 (PSGPAPPAPP) show a composition bias toward pro residues. The segment at residues 62–82 (LFAAFALLRFVAFQLGLLVAW) is an intramembrane region (helical). Over 83–613 (LCERLSRGAL…WNKDFGDTTV (531 aa)) the chain is Cytoplasmic. Residues 117–192 (HKRAFECISM…AMAKDRLQLL (76 aa)) enclose the MIT domain. Positions 224–312 (SESGAVPKKK…PAARKKKDTK (89 aa)) are disordered. 3 stretches are compositionally biased toward polar residues: residues 237–257 (THTS…STGL), 264–274 (PSYSGISTASV), and 281–299 (PATS…NKPS). ATP is bound at residue 379–386 (GPPGNGKT).

This sequence belongs to the AAA ATPase family. Spastin subfamily. As to quaternary structure, homohexamer. The homohexamer is stabilized by ATP-binding. The homohexamer may adopt a ring conformation through which microtubules pass prior to being severed. Interacts with microtubules.

It is found in the membrane. Its subcellular location is the cytoplasm. The protein resides in the cytoskeleton. It localises to the microtubule organizing center. The protein localises to the centrosome. It is found in the perinuclear region. Its subcellular location is the nucleus. The enzyme catalyses n ATP + n H2O + a microtubule = n ADP + n phosphate + (n+1) alpha/beta tubulin heterodimers.. Functionally, ATP-dependent microtubule severing protein that specifically recognizes and cuts microtubules that are polyglutamylated. Preferentially recognizes and acts on microtubules decorated with short polyglutamate tails: severing activity increases as the number of glutamates per tubulin rises from one to eight, but decreases beyond this glutamylation threshold. Microtubule severing promotes reorganization of cellular microtubule arrays and the release of microtubules from the centrosome following nucleation. Required for membrane traffic from the endoplasmic reticulum (ER) to the Golgi and for completion of the abscission stage of cytokinesis. Also plays a role in axon growth and the formation of axonal branches. The polypeptide is Spastin (Gallus gallus (Chicken)).